Reading from the N-terminus, the 1030-residue chain is Alpha-L-rhamnosidase (1030 aa).

Positions 133-297 (PSLEGSSWIW…GAGPWGRVAP (165 aa)) are carbohydrate-binding module-67 (CBM67). Residues D179 and N180 each coordinate Ca(2+). Alpha-L-rhamnose-binding positions include 179-180 (DN) and W203. N228 and P233 together coordinate Ca(2+). Alpha-L-rhamnose contacts are provided by residues D630, 634-636 (RDE), D643, and W695. E636 functions as the Proton donor in the catalytic mechanism. The active-site Proton acceptor is the E895. Position 916 (H916) interacts with alpha-L-rhamnose.

It belongs to the glycosyl hydrolase 78 family.

It catalyses the reaction Hydrolysis of terminal non-reducing alpha-L-rhamnose residues in alpha-L-rhamnosides.. Alpha-L-rhamnosidase which is able to degrade p-nitrophenyl-alpha-L-rhamnopyranoside (PNP-Rha) in vitro. Releases L-rhamnose from citrus flavonoids such as naringin, rutin and hesperidin, and the arabinogalactan-protein (AGP) gum arabic. AGPs are a family of proteoglycans that are localized on the cell surfaces of higher plants. Cleaves both the alpha-1,6 and the alpha-1,2-linked rhamnosyl residues. This Streptomyces avermitilis (strain ATCC 31267 / DSM 46492 / JCM 5070 / NBRC 14893 / NCIMB 12804 / NRRL 8165 / MA-4680) protein is Alpha-L-rhamnosidase.